Reading from the N-terminus, the 284-residue chain is Lipoyl synthase (284 aa).

The [4Fe-4S] cluster site is built by C36, C41, C47, C62, C66, C69, and S273. Positions 48-262 (WGKGTATFMI…RTIGLKKGFR (215 aa)) constitute a Radical SAM core domain.

It belongs to the radical SAM superfamily. Lipoyl synthase family. The cofactor is [4Fe-4S] cluster.

It localises to the cytoplasm. The catalysed reaction is [[Fe-S] cluster scaffold protein carrying a second [4Fe-4S](2+) cluster] + N(6)-octanoyl-L-lysyl-[protein] + 2 oxidized [2Fe-2S]-[ferredoxin] + 2 S-adenosyl-L-methionine + 4 H(+) = [[Fe-S] cluster scaffold protein] + N(6)-[(R)-dihydrolipoyl]-L-lysyl-[protein] + 4 Fe(3+) + 2 hydrogen sulfide + 2 5'-deoxyadenosine + 2 L-methionine + 2 reduced [2Fe-2S]-[ferredoxin]. It participates in protein modification; protein lipoylation via endogenous pathway; protein N(6)-(lipoyl)lysine from octanoyl-[acyl-carrier-protein]: step 2/2. Catalyzes the radical-mediated insertion of two sulfur atoms into the C-6 and C-8 positions of the octanoyl moiety bound to the lipoyl domains of lipoate-dependent enzymes, thereby converting the octanoylated domains into lipoylated derivatives. This chain is Lipoyl synthase, found in Phocaeicola vulgatus (strain ATCC 8482 / DSM 1447 / JCM 5826 / CCUG 4940 / NBRC 14291 / NCTC 11154) (Bacteroides vulgatus).